Here is a 778-residue protein sequence, read N- to C-terminus: Endonuclease MutS2 (778 aa).

Residue 328–335 (GPNTGGKT) participates in ATP binding. Positions 703–778 (LDLRGKRYEE…GSGCTIANLG (76 aa)) constitute a Smr domain.

The protein belongs to the DNA mismatch repair MutS family. MutS2 subfamily. As to quaternary structure, homodimer. Binds to stalled ribosomes, contacting rRNA.

Endonuclease that is involved in the suppression of homologous recombination and thus may have a key role in the control of bacterial genetic diversity. In terms of biological role, acts as a ribosome collision sensor, splitting the ribosome into its 2 subunits. Detects stalled/collided 70S ribosomes which it binds and splits by an ATP-hydrolysis driven conformational change. Acts upstream of the ribosome quality control system (RQC), a ribosome-associated complex that mediates the extraction of incompletely synthesized nascent chains from stalled ribosomes and their subsequent degradation. Probably generates substrates for RQC. In Streptococcus equi subsp. equi (strain 4047), this protein is Endonuclease MutS2.